Reading from the N-terminus, the 183-residue chain is MRNISNRERRNKDCLKLIEKNFSNNVLLSQIEAKNAYQRFIEKQIKGLSIAAFIVQDYDYTEIKVKYYRKQKIAWKIFFDQLKNDINLTDHNLILQDQFKKQLMLTSKKDPKCLERFINSLKELGLYNKYKKTMSNLNNKQIKTYANLLFSIYENKEIRSEIKLRVLKNVILQLPIIFDCISK.

This is an uncharacterized protein from Acanthamoeba polyphaga mimivirus (APMV).